We begin with the raw amino-acid sequence, 532 residues long: Amidophosphoribosyltransferase 3, chloroplastic (532 aa).

The N-terminal 59 residues, 1–59 (MAFSVEEISSILPNSLSANPRNVSQNTISPSFFKPSLKPYASKTLISLSCRRSLSPVFS), are a transit peptide targeting the chloroplast. Residue Cys-77 is the Nucleophile of the active site. In terms of domain architecture, Glutamine amidotransferase type-2 spans 77-296 (CGVVGIHGDP…PGEIVVVDRN (220 aa)). [4Fe-4S] cluster-binding residues include Cys-313, Cys-459, Cys-511, and Cys-514.

This sequence in the C-terminal section; belongs to the purine/pyrimidine phosphoribosyltransferase family. The cofactor is [4Fe-4S] cluster. Requires Mg(2+) as cofactor. In terms of tissue distribution, mostly expressed at low levels in leaves, and, to a lower extent, in cotyledons.

It localises to the plastid. The protein localises to the chloroplast stroma. The enzyme catalyses 5-phospho-beta-D-ribosylamine + L-glutamate + diphosphate = 5-phospho-alpha-D-ribose 1-diphosphate + L-glutamine + H2O. It participates in purine metabolism; IMP biosynthesis via de novo pathway; N(1)-(5-phospho-D-ribosyl)glycinamide from 5-phospho-alpha-D-ribose 1-diphosphate: step 1/2. Inhibited by the phenyltriazole acetic acid compound [5-(4-chlorophenyl)-1-isopropyl-1H-[1,2,4]triazol-3-yl]-acetic acid (DAS734), a bleaching herbicide. Repressed by AMP, ADP, ATP and GTP, and slightly by GMP. Catalyzes the first committed step of 'de novo' purine biosynthesis from glutamine. The polypeptide is Amidophosphoribosyltransferase 3, chloroplastic (ASE3) (Arabidopsis thaliana (Mouse-ear cress)).